We begin with the raw amino-acid sequence, 264 residues long: Ribosome-recycling factor, mitochondrial (264 aa).

It belongs to the RRF family.

The protein localises to the mitochondrion. Functionally, necessary for protein synthesis in mitochondria. Functions as a ribosome recycling factor in mitochondria. The protein is Ribosome-recycling factor, mitochondrial (RRF1) of Yarrowia lipolytica (strain CLIB 122 / E 150) (Yeast).